Consider the following 109-residue polypeptide: UPF0060 membrane protein HEAR0108 (109 aa).

Helical transmembrane passes span 7 to 27, 33 to 53, 63 to 83, and 87 to 107; these read VALF…PYLW, SIWL…LLSL, AAYG…VDGI, and NWDV…MFAP.

It belongs to the UPF0060 family.

The protein resides in the cell inner membrane. The sequence is that of UPF0060 membrane protein HEAR0108 from Herminiimonas arsenicoxydans.